Consider the following 299-residue polypeptide: Ribosomal protein L11 methyltransferase (299 aa).

4 residues coordinate S-adenosyl-L-methionine: threonine 140, glycine 161, aspartate 183, and asparagine 232.

Belongs to the methyltransferase superfamily. PrmA family.

The protein localises to the cytoplasm. It carries out the reaction L-lysyl-[protein] + 3 S-adenosyl-L-methionine = N(6),N(6),N(6)-trimethyl-L-lysyl-[protein] + 3 S-adenosyl-L-homocysteine + 3 H(+). In terms of biological role, methylates ribosomal protein L11. The polypeptide is Ribosomal protein L11 methyltransferase (Synechococcus elongatus (strain ATCC 33912 / PCC 7942 / FACHB-805) (Anacystis nidulans R2)).